The primary structure comprises 227 residues: PKHD-type hydroxylase Bamb_4192 (227 aa).

The 101-residue stretch at 78-178 folds into the Fe2OG dioxygenase domain; that stretch reads KVFPPLFNRY…RVASFFWIQS (101 aa). Residues His96, Asp98, and His159 each coordinate Fe cation. Arg169 provides a ligand contact to 2-oxoglutarate.

Fe(2+) serves as cofactor. L-ascorbate is required as a cofactor.

This Burkholderia ambifaria (strain ATCC BAA-244 / DSM 16087 / CCUG 44356 / LMG 19182 / AMMD) (Burkholderia cepacia (strain AMMD)) protein is PKHD-type hydroxylase Bamb_4192.